The primary structure comprises 291 residues: Porphobilinogen deaminase (291 aa).

The residue at position 237 (cysteine 237) is an S-(dipyrrolylmethanemethyl)cysteine.

This sequence belongs to the HMBS family. As to quaternary structure, monomer. Requires dipyrromethane as cofactor.

It catalyses the reaction 4 porphobilinogen + H2O = hydroxymethylbilane + 4 NH4(+). It functions in the pathway porphyrin-containing compound metabolism; protoporphyrin-IX biosynthesis; coproporphyrinogen-III from 5-aminolevulinate: step 2/4. Functionally, tetrapolymerization of the monopyrrole PBG into the hydroxymethylbilane pre-uroporphyrinogen in several discrete steps. In Clostridium perfringens (strain ATCC 13124 / DSM 756 / JCM 1290 / NCIMB 6125 / NCTC 8237 / Type A), this protein is Porphobilinogen deaminase.